Here is a 957-residue protein sequence, read N- to C-terminus: Nitrite reductase [NAD(P)H] large subunit (957 aa).

Residue 44 to 79 coordinates FAD; the sequence is YDRVHLTEYFAGRSAESLSLVEGDFFTQHGIELRLS. Residue 193-225 participates in NAD(+) binding; sequence LREKISELGVGVHTSKATTEIVRNEQGLQLNFR. Cys423, Cys425, Cys457, and Cys460 together coordinate [2Fe-2S] cluster. Positions 639, 645, 679, and 683 each coordinate [4Fe-4S] cluster. Cys683 is a siroheme binding site.

The protein belongs to the nitrite and sulfite reductase 4Fe-4S domain family. Homodimer which associates with NirD. It depends on siroheme as a cofactor. [2Fe-2S] cluster is required as a cofactor. The cofactor is [4Fe-4S] cluster. FAD serves as cofactor.

The enzyme catalyses NH4(+) + 3 NADP(+) + 2 H2O = nitrite + 3 NADPH + 5 H(+). It catalyses the reaction NH4(+) + 3 NAD(+) + 2 H2O = nitrite + 3 NADH + 5 H(+). Its pathway is nitrogen metabolism; nitrate reduction (assimilation). The protein is Nitrite reductase [NAD(P)H] large subunit (nasB) of Klebsiella oxytoca.